The chain runs to 246 residues: Uridylate kinase (246 aa).

ATP is bound at residue 20-23; sequence KISG. An involved in allosteric activation by GTP region spans residues 28–33; that stretch reads GDQGYG. Gly62 is a binding site for UMP. Residues Gly63 and Arg67 each coordinate ATP. Residues Asp82 and 143-150 contribute to the UMP site; that span reads TGNPYFTT. Residues Thr170, Tyr176, and Asp179 each contribute to the ATP site.

It belongs to the UMP kinase family. In terms of assembly, homohexamer.

It is found in the cytoplasm. The enzyme catalyses UMP + ATP = UDP + ADP. Its pathway is pyrimidine metabolism; CTP biosynthesis via de novo pathway; UDP from UMP (UMPK route): step 1/1. Its activity is regulated as follows. Allosterically activated by GTP. Inhibited by UTP. Its function is as follows. Catalyzes the reversible phosphorylation of UMP to UDP. The chain is Uridylate kinase from Cereibacter sphaeroides (strain ATCC 17029 / ATH 2.4.9) (Rhodobacter sphaeroides).